The following is a 398-amino-acid chain: Cyclic GMP-AMP synthase-like receptor (398 aa).

ATP-binding positions include serine 57 and 69-71 (EFD). Residues glutamate 69, aspartate 71, and aspartate 192 each contribute to the Mg(2+) site. GTP-binding positions include aspartate 192 and 240–247 (SLSFQEQE). ATP is bound by residues 244–247 (QEQE), lysine 265, and 277–281 (SYYIK). Mn(2+)-binding residues include isoleucine 288, glutamate 289, and aspartate 292.

The protein belongs to the mab-21 family. Mg(2+) serves as cofactor. The cofactor is Mn(2+).

The enzyme catalyses GTP + ATP = 2',3'-cGAMP + 2 diphosphate. The catalysed reaction is GTP + ATP = pppGp(2'-5')A + diphosphate. It carries out the reaction pppGp(2'-5')A = 2',3'-cGAMP + diphosphate. With respect to regulation, the enzyme activity is specifically activated by double-stranded RNA (dsRNA). Nucleotidyltransferase that catalyzes the formation of cyclic GMP-AMP (2',3'-cGAMP) from ATP and GTP and plays a key role in innate immunity. Acts as a key sensor of double-stranded RNA (dsRNA), the presence of dsRNA in the cytoplasm being a danger signal that triggers the immune responses. Directly binds dsRNA, activating the nucleotidyltransferase activity, leading to synthesis of 2',3'-cGAMP, a second messenger that binds to and activates Sting, thereby triggering the antiviral immune response via activation of the NF-kappa-B transcription factor Rel (Relish). The sequence is that of Cyclic GMP-AMP synthase-like receptor from Tribolium castaneum (Red flour beetle).